The primary structure comprises 149 residues: Ribosome-binding factor A (149 aa).

A compositionally biased stretch (basic and acidic residues) spans 116-125; it reads TLFEELHPNP. Positions 116-149 are disordered; the sequence is TLFEELHPNPEEDDGDTDAETLLEDSESGIERET. A compositionally biased stretch (acidic residues) spans 126–143; sequence EEDDGDTDAETLLEDSES.

The protein belongs to the RbfA family. As to quaternary structure, monomer. Binds 30S ribosomal subunits, but not 50S ribosomal subunits or 70S ribosomes.

Its subcellular location is the cytoplasm. Its function is as follows. One of several proteins that assist in the late maturation steps of the functional core of the 30S ribosomal subunit. Associates with free 30S ribosomal subunits (but not with 30S subunits that are part of 70S ribosomes or polysomes). Required for efficient processing of 16S rRNA. May interact with the 5'-terminal helix region of 16S rRNA. This Leptospira biflexa serovar Patoc (strain Patoc 1 / Ames) protein is Ribosome-binding factor A.